The sequence spans 89 residues: Large ribosomal subunit protein bL31B (89 aa).

It belongs to the bacterial ribosomal protein bL31 family. Type B subfamily. In terms of assembly, part of the 50S ribosomal subunit.

The polypeptide is Large ribosomal subunit protein bL31B (Corynebacterium aurimucosum (strain ATCC 700975 / DSM 44827 / CIP 107346 / CN-1) (Corynebacterium nigricans)).